The primary structure comprises 183 residues: Ribosome-recycling factor (183 aa).

The protein belongs to the RRF family.

The protein localises to the cytoplasm. Functionally, responsible for the release of ribosomes from messenger RNA at the termination of protein biosynthesis. May increase the efficiency of translation by recycling ribosomes from one round of translation to another. The chain is Ribosome-recycling factor from Christiangramia forsetii (strain DSM 17595 / CGMCC 1.15422 / KT0803) (Gramella forsetii).